Reading from the N-terminus, the 164-residue chain is Transcriptional repressor NrdR (164 aa).

A zinc finger spans residues 3–34; that stretch reads CPFCRHDDTQVVDSRVSEDGAAIRRRRRCPAC. The region spanning 49–139 is the ATP-cone domain; it reads PSVVKKDGSR…VYRRFEDVSE (91 aa).

This sequence belongs to the NrdR family. It depends on Zn(2+) as a cofactor.

Negatively regulates transcription of bacterial ribonucleotide reductase nrd genes and operons by binding to NrdR-boxes. The chain is Transcriptional repressor NrdR from Paraburkholderia phymatum (strain DSM 17167 / CIP 108236 / LMG 21445 / STM815) (Burkholderia phymatum).